The following is a 451-amino-acid chain: KNR4/SMI1 homolog 1 (451 aa).

The segment covering 410-422 (ENQIAGGSDNAKN) has biased composition (polar residues). The interval 410–451 (ENQIAGGSDNAKNQVKLGETSDTKQDDTSKIASTVSTSDEDE) is disordered. The span at 428 to 438 (ETSDTKQDDTS) shows a compositional bias: basic and acidic residues. Residues 439–451 (KIASTVSTSDEDE) are compositionally biased toward polar residues.

This sequence belongs to the KNR4/SMI1 family.

This is KNR4/SMI1 homolog 1 from Debaryomyces hansenii (strain ATCC 36239 / CBS 767 / BCRC 21394 / JCM 1990 / NBRC 0083 / IGC 2968) (Yeast).